Here is a 428-residue protein sequence, read N- to C-terminus: Probable dual-specificity RNA methyltransferase RlmN 2 (428 aa).

The active-site Proton acceptor is the Glu142. One can recognise a Radical SAM core domain in the interval 148–414 (FAGRATACVS…STVRQRRGID (267 aa)). Residues Cys155 and Cys419 are joined by a disulfide bond. [4Fe-4S] cluster-binding residues include Cys162, Cys166, and Cys169. Residues 207 to 228 (MRDPSPGREAGEKSRDEADRHR) are compositionally biased toward basic and acidic residues. The disordered stretch occupies residues 207-232 (MRDPSPGREAGEKSRDEADRHRAPPT). S-adenosyl-L-methionine is bound by residues 244–245 (GE), Ser276, 299–301 (SLH), and Asn375. Cys419 acts as the S-methylcysteine intermediate in catalysis.

The protein belongs to the radical SAM superfamily. RlmN family. [4Fe-4S] cluster is required as a cofactor.

The protein resides in the cytoplasm. It carries out the reaction adenosine(2503) in 23S rRNA + 2 reduced [2Fe-2S]-[ferredoxin] + 2 S-adenosyl-L-methionine = 2-methyladenosine(2503) in 23S rRNA + 5'-deoxyadenosine + L-methionine + 2 oxidized [2Fe-2S]-[ferredoxin] + S-adenosyl-L-homocysteine. The enzyme catalyses adenosine(37) in tRNA + 2 reduced [2Fe-2S]-[ferredoxin] + 2 S-adenosyl-L-methionine = 2-methyladenosine(37) in tRNA + 5'-deoxyadenosine + L-methionine + 2 oxidized [2Fe-2S]-[ferredoxin] + S-adenosyl-L-homocysteine. Specifically methylates position 2 of adenine 2503 in 23S rRNA and position 2 of adenine 37 in tRNAs. This is Probable dual-specificity RNA methyltransferase RlmN 2 from Opitutus terrae (strain DSM 11246 / JCM 15787 / PB90-1).